A 429-amino-acid polypeptide reads, in one-letter code: MFVDQVKIYVKAGNGGDGMVAFRREKFVPNGGPAGGDGGKGADVVFVVDEGLRTLVDFRFKRIFKAEHGEHGMSKSMHGRGAEDLVVKVPQGTIVKDIDTGEIIADLVAHGQRAVIAKAGRGGRGNKRFATPANPAPELSENGEPGQERNVQLELKVLADVGLVGFPSVGKSTLLSVVSAARPKIAAYHFTTIVPNLGMVDAGDGRSFVMADLPGLIEGASQGVGLGHQFLRHIERTRVIVHVIDMSGSEGRVPYEDYMAINNELEQYNLRLMERPQIIVANKMDMPDAEENLNEFKTKIAEDIPVFPISAVTKTGLRELLLAIADKLETTPEFPLNEILEQEDEDTVLYKYVAEEPDFEISREPDGTFVLSGAKIERLFTMTNFERDASISRFARQLRAMGVDEALRKRGAKDGDIVRLLDYEFEFMD.

In terms of domain architecture, Obg spans 1–158 (MFVDQVKIYV…RNVQLELKVL (158 aa)). Residues 124 to 145 (RGNKRFATPANPAPELSENGEP) form a disordered region. Residues 159-329 (ADVGLVGFPS…LLLAIADKLE (171 aa)) enclose the OBG-type G domain. GTP-binding positions include 165-172 (GFPSVGKS), 190-194 (FTTIV), 212-215 (DLPG), 282-285 (NKMD), and 310-312 (SAV). Mg(2+) contacts are provided by Ser172 and Thr192. One can recognise an OCT domain in the interval 351–429 (KYVAEEPDFE…LLDYEFEFMD (79 aa)).

It belongs to the TRAFAC class OBG-HflX-like GTPase superfamily. OBG GTPase family. Monomer. The cofactor is Mg(2+).

It localises to the cytoplasm. In terms of biological role, an essential GTPase which binds GTP, GDP and possibly (p)ppGpp with moderate affinity, with high nucleotide exchange rates and a fairly low GTP hydrolysis rate. Plays a role in control of the cell cycle, stress response, ribosome biogenesis and in those bacteria that undergo differentiation, in morphogenesis control. The sequence is that of GTPase Obg from Listeria monocytogenes serotype 4b (strain F2365).